A 100-amino-acid chain; its full sequence is Small ribosomal subunit protein uS14c (100 aa).

The protein belongs to the universal ribosomal protein uS14 family. In terms of assembly, part of the 30S ribosomal subunit.

Its subcellular location is the plastid. It localises to the chloroplast. Binds 16S rRNA, required for the assembly of 30S particles. This Oltmannsiellopsis viridis (Marine flagellate) protein is Small ribosomal subunit protein uS14c.